The primary structure comprises 682 residues: Connectin (682 aa).

The N-terminal stretch at 1–24 (MATLADSAICFLLLSLLLIGACLV) is a signal peptide. Residues 29–54 (GRAKDDRRTRGRGSSSGVLSSSSSSS) form a disordered region. The segment covering 40 to 54 (RGSSSGVLSSSSSSS) has biased composition (low complexity). LRR repeat units lie at residues 149–172 (LRELKFVIQNNARLDYIPTMIIEP), 173–196 (LKNLSSIVIEYSQVEIVKSYAFAN), 199–220 (FLERIILNNNHIMALDQDAFAN), 223–244 (RLRELNLEHNQIFEMDRYAFRN), 247–268 (LCERLFLNNNNISTLHEGLFAD), 271–292 (RLTFLNLAHNQINVLTSEIFRG), 295–316 (NLNVLKLTRNNLNFIGDTVFAE), 319–342 (SLSELELDDNRIERISERALDGLN), 343–364 (TLKTLNLRNNLLKKIDNGLLRG), 367–388 (ALLSINVQANKLETLTFYTFQP), and 389–404 (IMDNLVNSTSELLVSD). The 58-residue stretch at 405–462 (NKFICDCRLQWIFELKNRTRHLQLRDSLEDLHCTLQEPKLSHFVDPVPPTILDVLNIG) folds into the LRRCT domain. The segment at 503-536 (RQALRGQRQFASSAENVVESKMRRRRKRQEEVKE) is disordered. Ala658 carries the GPI-anchor amidated alanine lipid modification. The propeptide at 659–682 (GANSLAQGMTIIVSLVALMMISRG) is removed in mature form.

In terms of tissue distribution, predominantly expressed in abdominal and thoracic segment muscle and motorneuron cells.

The protein resides in the cell membrane. Its function is as follows. Cell adhesion protein involved in target recognition during neuromuscular development. Mediates homophilic cellular adhesion. This is Connectin (Con) from Drosophila melanogaster (Fruit fly).